The primary structure comprises 476 residues: MLRIFNTLTKKKEIFDFLLNKKINIYVCGVTTYDFCHIGHARTFIIFDIIIRYLQYLGYNTFYIRNITDIDDKIINKAKINNESIHILVNRMIKLMHKDFLSLNLIKPDQEPRVTQHISNIISSIKLLLKNNYAYVSDNKDILFKLNNFKEYGFLSNRMFNCSEKNFTTISKEKNYINNINDFVLWKHSNQLSIDTCTNWSSPWGAGRPGWHIECSSIINNFFKDGVVDIHGGGIDLLFPHHENEIAQLKSMNNSFSVNFWIHSGMVINKNHKMSKSFSNSVSIQYLLKKYDSEIIRWYFLATHYRHPLYYSEKNLLMMKNIFIKIYRSLLDCVVTINTKIDYEYHLRNKIKRKFFSAMNDDFNTPKACSILQKISKLIYKNKKNNTYLANILASDLVYLGKILGLFQNDPKNFFLKDNFCNKSTDLLIIVEKLFHMRNFYRSKKQWNLSDIIRKKLFCLGVIVEDNSYSSYYRFI.

Residue cysteine 28 participates in Zn(2+) binding. Positions 30-40 match the 'HIGH' region motif; the sequence is VTTYDFCHIGH. Residues cysteine 215, histidine 241, and glutamate 245 each coordinate Zn(2+). Positions 273–277 match the 'KMSKS' region motif; the sequence is KMSKS. Lysine 276 lines the ATP pocket.

This sequence belongs to the class-I aminoacyl-tRNA synthetase family. As to quaternary structure, monomer. Requires Zn(2+) as cofactor.

It localises to the cytoplasm. It carries out the reaction tRNA(Cys) + L-cysteine + ATP = L-cysteinyl-tRNA(Cys) + AMP + diphosphate. The sequence is that of Cysteine--tRNA ligase from Buchnera aphidicola subsp. Cinara cedri (strain Cc).